Here is a 212-residue protein sequence, read N- to C-terminus: Probable GTP-binding protein EngB (212 aa).

Residues 25 to 199 enclose the EngB-type G domain; that stretch reads FGYEVAFAGR…WAKLDEWMEY (175 aa). GTP is bound by residues 33–40, 60–64, 78–81, 145–148, and 178–180; these read GRSNAGKS, GRTQL, DLPG, TKSD, and FSS. Residues serine 40 and threonine 62 each coordinate Mg(2+).

The protein belongs to the TRAFAC class TrmE-Era-EngA-EngB-Septin-like GTPase superfamily. EngB GTPase family. Requires Mg(2+) as cofactor.

Its function is as follows. Necessary for normal cell division and for the maintenance of normal septation. The chain is Probable GTP-binding protein EngB from Hydrogenovibrio crunogenus (strain DSM 25203 / XCL-2) (Thiomicrospira crunogena).